A 385-amino-acid polypeptide reads, in one-letter code: Cytochrome b (385 aa).

Residues 1-27 (MAFRKSNVYLSLVNSYIIDSPQPSSIN) lie on the Mitochondrial matrix side of the membrane. Residue tyrosine 16 participates in a ubiquinone binding. A helical membrane pass occupies residues 28-51 (YWWNMGSLLGLCLVIQIVTGIFMA). Over 52–74 (MHYSSNIELAFSSVEHIMRDVHN) the chain is Mitochondrial intermembrane. A helical membrane pass occupies residues 75–102 (GYILRYLHANGASFFFMVMFMHMAKGLY). Residues histidine 82 and histidine 96 each contribute to the heme b site. Residues 103 to 110 (YGSYRSPR) are Mitochondrial matrix-facing. A helical membrane pass occupies residues 111-135 (VTLWNVGVIIFILTIATAFLGYCCV). Over 136–172 (YGQMSHWGATVITNLFSAIPFVGNDIVSWLWGGFSVS) the chain is Mitochondrial intermembrane. The chain crosses the membrane as a helical span at residues 173 to 204 (NPTIQRFFALHYLVPFIIAAMVIMHLMALHIH). The heme b site is built by histidine 183 and histidine 197. Histidine 202 contacts a ubiquinone. At 205–223 (GSSNPLGITGNLDRIPMHS) the chain is on the mitochondrial matrix side. The chain crosses the membrane as a helical span at residues 224-246 (YFIFKDLVTVFLFMLILALFVFY). Residues 247-287 (SPNTLGHPDNYIPGNPLVTPASIVPEWYLLPFYAILRSIPD) lie on the Mitochondrial intermembrane side of the membrane. A helical transmembrane segment spans residues 288 to 308 (KLLGVITMFAAILVLLVLPFT). At 309–319 (DRSVVRGNTFK) the chain is on the mitochondrial matrix side. A helical transmembrane segment spans residues 320–340 (VLSKFFFFIFVFNFVLLGQIG). Over 341–347 (ACHVEVP) the chain is Mitochondrial intermembrane. Residues 348 to 364 (YVLMGQIATFIYFAYFL) form a helical membrane-spanning segment. The Mitochondrial matrix segment spans residues 365 to 385 (IIVPVISTIENVLFYIGRVNK).

The protein belongs to the cytochrome b family. In terms of assembly, component of the ubiquinol-cytochrome c oxidoreductase (cytochrome b-c1 complex, complex III, CIII), a multisubunit enzyme composed of 10 subunits. The complex is composed of 3 respiratory subunits cytochrome b (COB), cytochrome c1 (CYT1) and Rieske protein (RIP1), 2 core protein subunits COR1 and QCR2, and 5 low-molecular weight protein subunits QCR6, QCR7, QCR8, QCR9 and QCR10. The complex exists as an obligatory dimer and forms supercomplexes (SCs) in the inner mitochondrial membrane with a monomer or a dimer of cytochrome c oxidase (complex IV, CIV), resulting in 2 different assemblies (supercomplexes III(2)IV and III(2)IV(2)). The cofactor is heme b.

The protein localises to the mitochondrion inner membrane. The catalysed reaction is a quinol + 2 Fe(III)-[cytochrome c](out) = a quinone + 2 Fe(II)-[cytochrome c](out) + 2 H(+)(out). Functionally, component of the ubiquinol-cytochrome c oxidoreductase, a multisubunit transmembrane complex that is part of the mitochondrial electron transport chain which drives oxidative phosphorylation. The respiratory chain contains 3 multisubunit complexes succinate dehydrogenase (complex II, CII), ubiquinol-cytochrome c oxidoreductase (cytochrome b-c1 complex, complex III, CIII) and cytochrome c oxidase (complex IV, CIV), that cooperate to transfer electrons derived from NADH and succinate to molecular oxygen, creating an electrochemical gradient over the inner membrane that drives transmembrane transport and the ATP synthase. The cytochrome b-c1 complex catalyzes electron transfer from ubiquinol to cytochrome c, linking this redox reaction to translocation of protons across the mitochondrial inner membrane, with protons being carried across the membrane as hydrogens on the quinol. In the process called Q cycle, 2 protons are consumed from the matrix, 4 protons are released into the intermembrane space and 2 electrons are passed to cytochrome c. Cytochrome b is a catalytic core subunit containing 2 b-type hemes BL and BH topographically segregated in the quinone reduction (Qi) and quinol oxidation (Q0) sites on opposite sides of the membrane. This Saccharomyces cerevisiae (strain ATCC 204508 / S288c) (Baker's yeast) protein is Cytochrome b (COB).